The primary structure comprises 350 residues: Phosphoribosylformylglycinamidine cyclo-ligase (350 aa).

This sequence belongs to the AIR synthase family.

The protein localises to the cytoplasm. It carries out the reaction 2-formamido-N(1)-(5-O-phospho-beta-D-ribosyl)acetamidine + ATP = 5-amino-1-(5-phospho-beta-D-ribosyl)imidazole + ADP + phosphate + H(+). Its pathway is purine metabolism; IMP biosynthesis via de novo pathway; 5-amino-1-(5-phospho-D-ribosyl)imidazole from N(2)-formyl-N(1)-(5-phospho-D-ribosyl)glycinamide: step 2/2. This chain is Phosphoribosylformylglycinamidine cyclo-ligase, found in Syntrophotalea carbinolica (strain DSM 2380 / NBRC 103641 / GraBd1) (Pelobacter carbinolicus).